The following is a 399-amino-acid chain: Carbamoyl phosphate synthase small chain (399 aa).

A CPSase region spans residues M1 to E204. S60, G256, and G258 together coordinate L-glutamine. One can recognise a Glutamine amidotransferase type-1 domain in the interval H208–Q396. Residue C285 is the Nucleophile of the active site. 5 residues coordinate L-glutamine: L286, Q289, N327, G329, and F330. Active-site residues include H369 and E371.

The protein belongs to the CarA family. Composed of two chains; the small (or glutamine) chain promotes the hydrolysis of glutamine to ammonia, which is used by the large (or ammonia) chain to synthesize carbamoyl phosphate. Tetramer of heterodimers (alpha,beta)4.

The catalysed reaction is hydrogencarbonate + L-glutamine + 2 ATP + H2O = carbamoyl phosphate + L-glutamate + 2 ADP + phosphate + 2 H(+). It carries out the reaction L-glutamine + H2O = L-glutamate + NH4(+). The protein operates within amino-acid biosynthesis; L-arginine biosynthesis; carbamoyl phosphate from bicarbonate: step 1/1. Its pathway is pyrimidine metabolism; UMP biosynthesis via de novo pathway; (S)-dihydroorotate from bicarbonate: step 1/3. Its function is as follows. Small subunit of the glutamine-dependent carbamoyl phosphate synthetase (CPSase). CPSase catalyzes the formation of carbamoyl phosphate from the ammonia moiety of glutamine, carbonate, and phosphate donated by ATP, constituting the first step of 2 biosynthetic pathways, one leading to arginine and/or urea and the other to pyrimidine nucleotides. The small subunit (glutamine amidotransferase) binds and cleaves glutamine to supply the large subunit with the substrate ammonia. The sequence is that of Carbamoyl phosphate synthase small chain from Bartonella bacilliformis (strain ATCC 35685 / KC583 / Herrer 020/F12,63).